The chain runs to 639 residues: 1-deoxy-D-xylulose-5-phosphate synthase (639 aa).

Thiamine diphosphate contacts are provided by residues H79 and 120–122; that span reads AHS. D151 lines the Mg(2+) pocket. Residues 152 to 153, N180, Y289, and E371 contribute to the thiamine diphosphate site; that span reads GA. A Mg(2+)-binding site is contributed by N180.

Belongs to the transketolase family. DXPS subfamily. As to quaternary structure, homodimer. Mg(2+) is required as a cofactor. Requires thiamine diphosphate as cofactor.

The enzyme catalyses D-glyceraldehyde 3-phosphate + pyruvate + H(+) = 1-deoxy-D-xylulose 5-phosphate + CO2. It functions in the pathway metabolic intermediate biosynthesis; 1-deoxy-D-xylulose 5-phosphate biosynthesis; 1-deoxy-D-xylulose 5-phosphate from D-glyceraldehyde 3-phosphate and pyruvate: step 1/1. Its function is as follows. Catalyzes the acyloin condensation reaction between C atoms 2 and 3 of pyruvate and glyceraldehyde 3-phosphate to yield 1-deoxy-D-xylulose-5-phosphate (DXP). The sequence is that of 1-deoxy-D-xylulose-5-phosphate synthase from Allorhizobium ampelinum (strain ATCC BAA-846 / DSM 112012 / S4) (Agrobacterium vitis (strain S4)).